A 275-amino-acid chain; its full sequence is Alpha carbonic anhydrase 7 (275 aa).

An N-terminal signal peptide occupies residues 1–27 (MVNYSSISCIFFVALFSIFTIVSISSA). Residues Asn-3 and Asn-96 are each glycosylated (N-linked (GlcNAc...) asparagine). The region spanning 38–272 (REFNYKKNDE…TNKRIVHLYR (235 aa)) is the Alpha-carbonic anhydrase domain. Cys-63 and Cys-222 are oxidised to a cystine. His-104 (proton acceptor) is an active-site residue. Residues His-130, His-132, and His-149 each coordinate Zn(2+). Residue 218-219 (TT) participates in substrate binding. N-linked (GlcNAc...) asparagine glycosylation is present at Asn-225.

It belongs to the alpha-class carbonic anhydrase family. Requires Zn(2+) as cofactor. Post-translationally, N-glycosylated.

It is found in the plastid. The protein localises to the chloroplast stroma. It carries out the reaction hydrogencarbonate + H(+) = CO2 + H2O. Functionally, reversible hydration of carbon dioxide. The sequence is that of Alpha carbonic anhydrase 7 (ACA7) from Arabidopsis thaliana (Mouse-ear cress).